A 637-amino-acid chain; its full sequence is ATP-dependent zinc metalloprotease FtsH (637 aa).

Topologically, residues 1–6 are cytoplasmic; it reads MNNQGR. The helical transmembrane segment at 7–27 threads the bilayer; sequence SILAWAALFIFVILLFNVFQS. Topologically, residues 28–103 are periplasmic; it reads DGLLGVRNNI…VVPLETRMNT (76 aa). Residues 104–124 form a helical membrane-spanning segment; it reads FLGFLISWFPMLLLIGVWVFF. Topologically, residues 125 to 637 are cytoplasmic; the sequence is MRQMHGGGKA…TKAQKENIAS (513 aa). An ATP-binding site is contributed by 195–202; it reads GPPGTGKT. H417 contributes to the Zn(2+) binding site. E418 is an active-site residue. 2 residues coordinate Zn(2+): H421 and D495. The segment at 617–637 is disordered; sequence DKEKLHEKTKTTKAQKENIAS.

This sequence in the central section; belongs to the AAA ATPase family. The protein in the C-terminal section; belongs to the peptidase M41 family. Homohexamer. Zn(2+) serves as cofactor.

It localises to the cell inner membrane. Functionally, acts as a processive, ATP-dependent zinc metallopeptidase for both cytoplasmic and membrane proteins. Plays a role in the quality control of integral membrane proteins. The polypeptide is ATP-dependent zinc metalloprotease FtsH (Rickettsia typhi (strain ATCC VR-144 / Wilmington)).